The following is a 346-amino-acid chain: fMet-Leu-Phe receptor (346 aa).

Asn-1 and Asn-7 each carry an N-linked (GlcNAc...) asparagine glycan. The Extracellular portion of the chain corresponds to Asn-1–Ile-24. Residues Val-25–Val-47 form a helical membrane-spanning segment. The Cytoplasmic portion of the chain corresponds to Ala-48–Thr-58. A helical membrane pass occupies residues Ile-59–Val-80. Over Lys-81–Phe-97 the chain is Extracellular. Cys-95 and Cys-173 are disulfide-bonded. Residues Ile-98 to Leu-118 traverse the membrane as a helical segment. At Asp-119 to Ser-137 the chain is on the cytoplasmic side. Residues Leu-138–Ile-159 traverse the membrane as a helical segment. The Extracellular segment spans residues Arg-160–Arg-202. The chain crosses the membrane as a helical span at residues Phe-203–Thr-223. The Cytoplasmic segment spans residues Lys-224 to Val-239. A helical membrane pass occupies residues Leu-240–Val-263. Topologically, residues Arg-264–Val-282 are extracellular. Residues Thr-283 to Gly-302 form a helical membrane-spanning segment. Residues Gln-303–Ala-346 lie on the Cytoplasmic side of the membrane. Positions Thr-322–Ala-346 are disordered. Positions Glu-323–Pro-338 are enriched in polar residues.

The protein belongs to the G-protein coupled receptor 1 family. Post-translationally, phosphorylated; which is necessary for desensitization.

The protein localises to the cell membrane. Functionally, high affinity receptor for N-formyl-methionyl peptides (fMLP), which are powerful neutrophil chemotactic factors. Binding of fMLP to the receptor stimulates intracellular calcium mobilization and superoxide anion release. This response is mediated via a G-protein that activates a phosphatidylinositol-calcium second messenger system. Receptor for TAFA4, mediates its effects on chemoattracting macrophages, promoting phagocytosis and increasing ROS release. Receptor for cathepsin CTSG, leading to increased phagocyte chemotaxis. The protein is fMet-Leu-Phe receptor (FPR1) of Gorilla gorilla gorilla (Western lowland gorilla).